A 324-amino-acid polypeptide reads, in one-letter code: DNA-directed RNA polymerase subunit alpha (324 aa).

Residues 1–230 form an alpha N-terminal domain (alpha-NTD) region; that stretch reads MQSSGLLKPR…EQLSVFADLE (230 aa). Residues 244 to 324 are alpha C-terminal domain (alpha-CTD); that stretch reads VDPVLLRPVD…NWPPAGLEKA (81 aa).

It belongs to the RNA polymerase alpha chain family. In terms of assembly, homodimer. The RNAP catalytic core consists of 2 alpha, 1 beta, 1 beta' and 1 omega subunit. When a sigma factor is associated with the core the holoenzyme is formed, which can initiate transcription.

It catalyses the reaction RNA(n) + a ribonucleoside 5'-triphosphate = RNA(n+1) + diphosphate. In terms of biological role, DNA-dependent RNA polymerase catalyzes the transcription of DNA into RNA using the four ribonucleoside triphosphates as substrates. In Dechloromonas aromatica (strain RCB), this protein is DNA-directed RNA polymerase subunit alpha.